The primary structure comprises 226 residues: Glutathione peroxidase 3 (226 aa).

Positions 1 to 24 (MARLLQASCLLSLLLAGFLPQSRG) are cleaved as a signal peptide. U73 is a catalytic residue. Position 73 (U73) is a non-standard amino acid, selenocysteine.

Belongs to the glutathione peroxidase family. As to quaternary structure, homotetramer. As to expression, expressed intensively in the kidney and adrenal gland, and weakly in the cerebellum, heart, and lung. Secreted in plasma.

Its subcellular location is the secreted. The enzyme catalyses 2 glutathione + H2O2 = glutathione disulfide + 2 H2O. It carries out the reaction tert-butyl hydroperoxide + 2 glutathione = tert-butanol + glutathione disulfide + H2O. Protects cells and enzymes from oxidative damage, by catalyzing the reduction of hydrogen peroxide, lipid peroxides and organic hydroperoxide, by glutathione. This chain is Glutathione peroxidase 3, found in Macaca fuscata fuscata (Japanese macaque).